The following is a 113-amino-acid chain: uncharacterized protein (113 aa).

The protein localises to the mitochondrion. This is an uncharacterized protein from Paramecium tetraurelia.